The primary structure comprises 515 residues: Putative myristoylated protein 118L (515 aa).

Glycine 2 carries the N-myristoyl glycine; by host lipid modification. 3 helical membrane passes run 188–208, 214–234, and 482–502; these read LSLAMIALIIVAMGLTGVGGV, IIFPAVLIGSIVSFVLYFQWT, and WLLYLAIGLLIVGVIGMAFSS.

It belongs to the IIV-6 118L/458R family.

The protein localises to the membrane. This Acheta domesticus (House cricket) protein is Putative myristoylated protein 118L.